The chain runs to 1669 residues: Polycomb group protein Asx (1669 aa).

Positions isoleucine 90 to proline 109 are disordered. A DEUBAD domain is found at proline 215–serine 338. 2 short sequence motifs (LXXLL motif) span residues leucine 224–leucine 228 and leucine 244–leucine 248. The NEF motif motif lies at asparagine 283–phenylalanine 285. Over residues lysine 336–asparagine 352 the composition is skewed to basic and acidic residues. Disordered regions lie at residues lysine 336–threonine 378, serine 410–asparagine 478, phenylalanine 635–alanine 718, methionine 952–arginine 972, glutamine 1174–leucine 1193, proline 1398–leucine 1437, leucine 1482–serine 1505, and serine 1587–histidine 1610. Polar residues-rich tracts occupy residues alanine 367 to threonine 378, phenylalanine 413 to glutamate 425, and proline 434 to threonine 450. The segment covering lysine 465–glutamate 474 has biased composition (basic and acidic residues). A compositionally biased stretch (low complexity) spans phenylalanine 635–asparagine 650. Over residues lysine 651–aspartate 661 the composition is skewed to basic and acidic residues. Residues isoleucine 666–alanine 718 are compositionally biased toward low complexity. 2 stretches are compositionally biased toward low complexity: residues glutamine 1174 to glutamine 1192 and threonine 1404 to glutamine 1436. The span at proline 1592–histidine 1610 shows a compositional bias: low complexity. A PHD-type; atypical zinc finger spans residues glutamine 1602–cysteine 1666.

The protein belongs to the Asx family. As to quaternary structure, component of the polycomb repressive deubiquitinase (PR-DUB) complex, at least composed of caly/calypso, Asx and sba (MBD5/6 homolog). Interacts (via DEUBAD domain) with caly/calypso (via ULD domain); the interaction produces a stable heterodimer with a composite binding site for ubiquitin. Two copies of the caly-Asx heterodimer assemble into a bidentate tetramer. Interacts (via PHD domain) with sba (probably via MBD domain); the interaction is important for the stability of the PR-DUB complex. Interacts with tant. Interacts with cyclin CycG. Highly expressed in nurse cells and deposited in oocytes late in oogenesis. Ubiquitous in early embryos. Late embryos show higher levels in CNS and neurectoderm.

It is found in the nucleus. Its subcellular location is the chromosome. In terms of biological role, non-catalytic component of the polycomb repressive deubiquitinase (PR-DUB) complex, a complex that specifically mediates deubiquitination of histone H2A monoubiquitinated at 'Lys-119' (H2AK118ub1). Activator of the PR-DUB complex involved in ubiquitin binding and allosteric activation of calypso deubiquitinase activity. PR-DUB does not deubiquitinate monoubiquitinated histone H2B. PR-DUB is required to maintain the transcriptionally repressive state of homeotic genes throughout development. The PR-DUB complex has weak or no activity toward 'Lys-48'- and 'Lys-63'-linked polyubiquitin chains. Atypical Polycomb group protein, which may be involved in both Polycomb group (PcG) and trithorax group (trxG) complexes. PcG and trxG proteins act by forming multiprotein complexes, which are respectively required to maintain the transcriptionally repressive and transcriptionally active state of homeotic genes throughout development. PcG and trxG protein complexes are not required to initiate repression and activation, but to maintain it during later stages of development. The polypeptide is Polycomb group protein Asx (Drosophila melanogaster (Fruit fly)).